Here is a 101-residue protein sequence, read N- to C-terminus: uncharacterized protein (101 aa).

This is an uncharacterized protein from Saccharomyces cerevisiae (strain ATCC 204508 / S288c) (Baker's yeast).